The sequence spans 62 residues: Large ribosomal subunit protein bL28 (62 aa).

It belongs to the bacterial ribosomal protein bL28 family.

This Thermobifida fusca (strain YX) protein is Large ribosomal subunit protein bL28.